The following is a 115-amino-acid chain: NADH-ubiquinone oxidoreductase chain 3 (115 aa).

A run of 3 helical transmembrane segments spans residues 3-23 (LMLTLLTNTLLASLLVLIAFW), 55-75 (FFLVAITFLLFDLEIALLLPL), and 84-104 (LNTMLIMALVLISLLAISLAY).

Belongs to the complex I subunit 3 family. As to quaternary structure, core subunit of respiratory chain NADH dehydrogenase (Complex I) which is composed of 45 different subunits. Interacts with TMEM186. Interacts with TMEM242.

The protein localises to the mitochondrion inner membrane. It catalyses the reaction a ubiquinone + NADH + 5 H(+)(in) = a ubiquinol + NAD(+) + 4 H(+)(out). In terms of biological role, core subunit of the mitochondrial membrane respiratory chain NADH dehydrogenase (Complex I) which catalyzes electron transfer from NADH through the respiratory chain, using ubiquinone as an electron acceptor. Essential for the catalytic activity of complex I. The chain is NADH-ubiquinone oxidoreductase chain 3 from Equus caballus (Horse).